The following is a 424-amino-acid chain: Isovaleryl-CoA dehydrogenase, mitochondrial (424 aa).

Residues 1–30 constitute a mitochondrion transit peptide; sequence MATAVRLLGRRVSSWRLRPLPSPLAVPQRA. K56, K65, and K76 each carry N6-acetyllysine; alternate. An N6-succinyllysine; alternate mark is found at K56, K65, and K76. Residues 163-172 and 196-198 each bind FAD; these read LAMSEPNAGS and WIT. Position 172 (S172) interacts with substrate. 220 to 221 contacts substrate; that stretch reads SR. The residue at position 239 (K239) is an N6-acetyllysine. The residue at position 260 (K260) is an N6-acetyllysine; alternate. The residue at position 260 (K260) is an N6-succinyllysine; alternate. Substrate is bound by residues Y275 and 282-285; that span reads DLER. The active-site Proton acceptor is E284. Residue R310 coordinates FAD. K316 is subject to N6-succinyllysine. FAD contacts are provided by residues Q321 and 378–382; that span reads QCLGG. Residue 405–406 coordinates substrate; that stretch reads GG. An FAD-binding site is contributed by 407-409; sequence TSE.

It belongs to the acyl-CoA dehydrogenase family. In terms of assembly, homotetramer. FAD serves as cofactor.

It is found in the mitochondrion matrix. The enzyme catalyses 3-methylbutanoyl-CoA + oxidized [electron-transfer flavoprotein] + H(+) = 3-methylbut-2-enoyl-CoA + reduced [electron-transfer flavoprotein]. It catalyses the reaction pentanoyl-CoA + oxidized [electron-transfer flavoprotein] + H(+) = (2E)-pentenoyl-CoA + reduced [electron-transfer flavoprotein]. The catalysed reaction is hexanoyl-CoA + oxidized [electron-transfer flavoprotein] + H(+) = (2E)-hexenoyl-CoA + reduced [electron-transfer flavoprotein]. It carries out the reaction butanoyl-CoA + oxidized [electron-transfer flavoprotein] + H(+) = (2E)-butenoyl-CoA + reduced [electron-transfer flavoprotein]. It functions in the pathway amino-acid degradation; L-leucine degradation; (S)-3-hydroxy-3-methylglutaryl-CoA from 3-isovaleryl-CoA: step 1/3. Its function is as follows. Catalyzes the conversion of isovaleryl-CoA/3-methylbutanoyl-CoA to 3-methylbut-2-enoyl-CoA as an intermediate step in the leucine (Leu) catabolic pathway. To a lesser extent, is also able to catalyze the oxidation of other saturated short-chain acyl-CoA thioesters as pentanoyl-CoA, hexenoyl-CoA and butenoyl-CoA. The protein is Isovaleryl-CoA dehydrogenase, mitochondrial (Ivd) of Rattus norvegicus (Rat).